Reading from the N-terminus, the 240-residue chain is UDP-2,3-diacylglucosamine hydrolase (240 aa).

Asp8, His10, Asp41, Asn79, and His114 together coordinate Mn(2+). 79-80 (NR) contacts substrate. Residues Asp122, Ser160, Asn164, Lys167, and His195 each coordinate substrate. Mn(2+)-binding residues include His195 and His197.

Belongs to the LpxH family. It depends on Mn(2+) as a cofactor.

The protein resides in the cell inner membrane. It catalyses the reaction UDP-2-N,3-O-bis[(3R)-3-hydroxytetradecanoyl]-alpha-D-glucosamine + H2O = 2-N,3-O-bis[(3R)-3-hydroxytetradecanoyl]-alpha-D-glucosaminyl 1-phosphate + UMP + 2 H(+). The protein operates within glycolipid biosynthesis; lipid IV(A) biosynthesis; lipid IV(A) from (3R)-3-hydroxytetradecanoyl-[acyl-carrier-protein] and UDP-N-acetyl-alpha-D-glucosamine: step 4/6. Hydrolyzes the pyrophosphate bond of UDP-2,3-diacylglucosamine to yield 2,3-diacylglucosamine 1-phosphate (lipid X) and UMP by catalyzing the attack of water at the alpha-P atom. Involved in the biosynthesis of lipid A, a phosphorylated glycolipid that anchors the lipopolysaccharide to the outer membrane of the cell. The chain is UDP-2,3-diacylglucosamine hydrolase from Pectobacterium atrosepticum (strain SCRI 1043 / ATCC BAA-672) (Erwinia carotovora subsp. atroseptica).